A 94-amino-acid chain; its full sequence is Myosuppressin (94 aa).

Residues 1–24 (MMSPTLMILISITTMAILSGESFG) form the signal peptide. Residues 25-80 (AMPAQCNSEFLEELPPRLRKICVAIARIWDAREMNDFVDDREYRENLPRYDSSVKR) constitute a propeptide that is removed on maturation. Residue Q81 is modified to Pyrrolidone carboxylic acid. F90 is modified (phenylalanine amide).

In terms of tissue distribution, expressed throughout the nervous system (at protein level).

Its subcellular location is the secreted. In terms of biological role, myoinhibiting neuropeptide. In Camponotus floridanus (Florida carpenter ant), this protein is Myosuppressin.